Consider the following 136-residue polypeptide: Large-conductance mechanosensitive channel (136 aa).

Helical transmembrane passes span 10-30 (FAMR…AAFG) and 76-96 (GSFI…FSAV).

Belongs to the MscL family. As to quaternary structure, homopentamer.

The protein localises to the cell inner membrane. Functionally, channel that opens in response to stretch forces in the membrane lipid bilayer. May participate in the regulation of osmotic pressure changes within the cell. The polypeptide is Large-conductance mechanosensitive channel (Yersinia enterocolitica serotype O:8 / biotype 1B (strain NCTC 13174 / 8081)).